Reading from the N-terminus, the 325-residue chain is Olfactory receptor 6Y1 (325 aa).

Residues 1–30 (MTTIILEVDNHTVTTRFILLGFPTRPAFQL) are Extracellular-facing. Asn10 carries N-linked (GlcNAc...) asparagine glycosylation. A helical membrane pass occupies residues 31–51 (LFFSIFLATYLLTLLENLLII). Topologically, residues 52–59 (LAIHSDGQ) are cytoplasmic. A helical transmembrane segment spans residues 60 to 80 (LHKPMYFFLSHLSFLEMWYVT). The Extracellular portion of the chain corresponds to 81–104 (VISPKMLVDFLSHDKSISFNGCMT). An intrachain disulfide couples Cys102 to Cys194. The helical transmembrane segment at 105–125 (QLYFFVTFVCTEYILLAIMAF) threads the bilayer. Over 126-144 (DRYVAICNPLRYPVIMTNQ) the chain is Cytoplasmic. A helical membrane pass occupies residues 145 to 165 (LCGTLAGGCWFCGLMTAMIKM). Topologically, residues 166-202 (VFIAQLHYCGMPQINHYFCDISPLLNVSCEDASQAEM) are extracellular. N-linked (GlcNAc...) asparagine glycosylation is present at Asn191. The chain crosses the membrane as a helical span at residues 203-222 (VDFFLALMVIAIPLCVVVAS). Over 223–242 (YAAILATILRIPSAQGRQKA) the chain is Cytoplasmic. A helical membrane pass occupies residues 243-263 (FSTCASHLTVVILFYSMTLFT). Topologically, residues 264 to 276 (YARPKLMYAYNSN) are extracellular. A helical transmembrane segment spans residues 277 to 297 (KVVSVLYTVIVPLLNPIIYCL). Topologically, residues 298–325 (RNHEVKAALRKTIHCRGSGPQGNGAFSS) are cytoplasmic.

It belongs to the G-protein coupled receptor 1 family.

It is found in the cell membrane. Functionally, odorant receptor. This is Olfactory receptor 6Y1 (OR6Y1) from Homo sapiens (Human).